A 274-amino-acid chain; its full sequence is Dermonecrotic toxin SdSicTox-betaIIB1bi (274 aa).

His-5 is an active-site residue. Residues Glu-25 and Asp-27 each contribute to the Mg(2+) site. The Nucleophile role is filled by His-41. 2 cysteine pairs are disulfide-bonded: Cys-45-Cys-51 and Cys-47-Cys-190. A Mg(2+)-binding site is contributed by Asp-85.

The protein belongs to the arthropod phospholipase D family. Class II subfamily. Mg(2+) serves as cofactor. As to expression, expressed by the venom gland.

The protein localises to the secreted. It catalyses the reaction an N-(acyl)-sphingosylphosphocholine = an N-(acyl)-sphingosyl-1,3-cyclic phosphate + choline. The catalysed reaction is an N-(acyl)-sphingosylphosphoethanolamine = an N-(acyl)-sphingosyl-1,3-cyclic phosphate + ethanolamine. The enzyme catalyses a 1-acyl-sn-glycero-3-phosphocholine = a 1-acyl-sn-glycero-2,3-cyclic phosphate + choline. It carries out the reaction a 1-acyl-sn-glycero-3-phosphoethanolamine = a 1-acyl-sn-glycero-2,3-cyclic phosphate + ethanolamine. Dermonecrotic toxins cleave the phosphodiester linkage between the phosphate and headgroup of certain phospholipids (sphingolipid and lysolipid substrates), forming an alcohol (often choline) and a cyclic phosphate. This toxin acts on sphingomyelin (SM). It may also act on ceramide phosphoethanolamine (CPE), lysophosphatidylcholine (LPC) and lysophosphatidylethanolamine (LPE), but not on lysophosphatidylserine (LPS), and lysophosphatidylglycerol (LPG). It acts by transphosphatidylation, releasing exclusively cyclic phosphate products as second products. Induces dermonecrosis, hemolysis, increased vascular permeability, edema, inflammatory response, and platelet aggregation. The sequence is that of Dermonecrotic toxin SdSicTox-betaIIB1bi from Sicarius cf. damarensis (strain GJB-2008) (Six-eyed sand spider).